The following is a 558-amino-acid chain: INCREASED PETAL GROWTH ANISOTROPY 1-like protein 2 (558 aa).

The segment covering 1 to 15 has biased composition (low complexity); the sequence is MSRISTTSTTPSRVR. A disordered region spans residues 1–54; it reads MSRISTTSTTPSRVRAANSHYSVISKPRAQDDNGLTGGKPKSSGYDVKNDPAKR. A coiled-coil region spans residues 104–180; that stretch reads VMATAAAEDE…EAKISSLSSN (77 aa). Residues 207–285 are disordered; sequence KVKKEVAVES…AARAQKSPPV (79 aa). Pro residues-rich tracts occupy residues 221–236 and 256–272; these read PPSP…PPLP and FAPP…PPRP. Residues 392–448 adopt a coiled-coil conformation; sequence KADTLQEAAVEYRELKKLEKELSSYSDDPNIHYGVALKKMANLLDKSEQRIRRLVRL.

This sequence belongs to the IPGA1 family.

Its subcellular location is the cytoplasm. It is found in the cytoskeleton. In terms of biological role, microtubule-associated protein probably involved in the regulation of microtubule organization. The polypeptide is INCREASED PETAL GROWTH ANISOTROPY 1-like protein 2 (Arabidopsis thaliana (Mouse-ear cress)).